We begin with the raw amino-acid sequence, 1161 residues long: Voltage-gated inwardly rectifying potassium channel KCNH2 (1161 aa).

Residues 1 to 405 lie on the Cytoplasmic side of the membrane; the sequence is MPVRRGHVAP…RIHRWTILHY (405 aa). Positions 17 to 88 constitute a PAS domain; the sequence is TIIRKFEGQS…AAQIAQALLG (72 aa). Residues 92 to 144 enclose the PAC domain; the sequence is RKVEIAFYRKDGSCFLCLVDVVPVKNEDGAVIMFILNFEVVMEKDMVGSPARD. The disordered stretch occupies residues 233 to 286; that stretch reads ALVGSCSPPPPVSAPGPHPSLRAHSLNPDASGSSCSLARTRSRESCASVRRASS. Ser-239 and Ser-245 each carry phosphoserine. Residues 239 to 250 are compositionally biased toward pro residues; the sequence is SPPPPVSAPGPH. The segment covering 260 to 271 has biased composition (polar residues); sequence PDASGSSCSLAR. Ser-285, Ser-286, Ser-322, and Ser-353 each carry phosphoserine. The helical transmembrane segment at 406–426 threads the bilayer; it reads SPFKAVWDWLILLLVIYTAVF. Residues 427–452 lie on the Extracellular side of the membrane; sequence TPYSAAFLLKETEEGPPAPECGYACQ. The chain crosses the membrane as a helical span at residues 453–473; the sequence is PLAVVDLIVDIMFIVDILINF. The Cytoplasmic segment spans residues 474 to 497; that stretch reads RTTYVNANEEVVSHPGRIAVHYFK. A helical transmembrane segment spans residues 498-518; it reads GWFLIDMVAAIPFDLLIFGSG. The Extracellular segment spans residues 519 to 522; sequence SEEL. The chain crosses the membrane as a helical; Voltage-sensor span at residues 523–543; the sequence is IGLLKTARLLRLVRVARKLDR. The Cytoplasmic portion of the chain corresponds to 544 to 549; the sequence is YSEYGA. Residues 550–570 form a helical membrane-spanning segment; that stretch reads AVLLLLMCTFALIAHWLACIW. Residues 571–613 are Extracellular-facing; sequence YAIGNMEQPHMDSRIGWLHNLGDQMGKPYNSSGLGGPSIKDKY. Asn-600 is a glycosylation site (N-linked (GlcNAc...) asparagine). The segment at residues 614–634 is an intramembrane region (pore-forming); sequence VTGLYFTFSSLTSVGFGNVSP. A Selectivity filter motif is present at residues 626 to 631; the sequence is SVGFGN. At 635–640 the chain is on the extracellular side; that stretch reads NTNSEK. Residues 641-661 traverse the membrane as a helical segment; sequence IFSICVMLIGSLMYASIFGNV. Residues 662–1161 lie on the Cytoplasmic side of the membrane; sequence SAIIQRLYSG…LHRHGSDPGS (500 aa). A cNMP-binding domain region spans residues 744–844; the sequence is PFRGATKDCL…IHRDDLLEVL (101 aa). The tract at residues 872–985 is disordered; the sequence is GSPGSTEWEG…TEDCEKSSDT (114 aa). Ser-873 and Ser-876 each carry phosphoserine. The span at 885–894 shows a compositional bias: basic residues; the sequence is RQRKRKLSFR. Residues 930 to 941 show a composition bias toward low complexity; that stretch reads GESPSSGPSSPE. Over residues 962–972 the composition is skewed to pro residues; the sequence is SPRPPGEPPGG. Arg-1016 is subject to Omega-N-methylarginine. The stretch at 1037-1064 forms a coiled coil; the sequence is RGDVESRLDALQRQLNRLETRLSADMAT. The segment at 1121 to 1161 is disordered; that stretch reads ELPPGAPELPQEGPTRRLSLPGQLGALTSQPLHRHGSDPGS. Ser-1139 carries the post-translational modification Phosphoserine.

The protein belongs to the potassium channel family. H (Eag) (TC 1.A.1.20) subfamily. Kv11.1/KCNH2 sub-subfamily. As to quaternary structure, the potassium channel is probably composed of a homo- or heterotetrameric complex of pore-forming alpha subunits that can associate with modulating beta subunits. Interacts with DNAJB12 and DNAJB14; chaperones DNAJB12 and DNAJB14 promote tetramerization. Heteromultimer with KCNH6/ERG2 and KCNH7/ERG3. Interacts with ALG10B. Forms a stable complex with KCNE1 or KCNE2, and that this heteromultimerization regulates Inward rectifier potassium channel activity. Interacts with CANX. The core-glycosylated, but not the fully glycosylated form interacts with RNF207. Interacts with NDFIP1 and NDFIP2; this interaction decreases the cell membrane expression by targeting KCNH2, through interaction with NEDD4L, for the degradation through the multivesicular bodies (MVBs)-lysosomal pathway. In terms of processing, phosphorylated on serine and threonine residues. Phosphorylation by PKA inhibits ion conduction. As to expression, detected in heart, both in atrium and in left ventricle.

Its subcellular location is the cell membrane. The catalysed reaction is K(+)(in) = K(+)(out). Pore-forming (alpha) subunit of voltage-gated inwardly rectifying potassium channel. Characterized by unusual gating kinetics by producing relatively small outward currents during membrane depolarization and large inward currents during subsequent repolarization which reflect a rapid inactivation during depolarization and quick recovery from inactivation but slow deactivation (closing) during repolarization. Channel properties are modulated by cAMP and subunit assembly. Forms a stable complex with KCNE1 or KCNE2, and that this heteromultimerization regulates inward rectifier potassium channel activity. This chain is Voltage-gated inwardly rectifying potassium channel KCNH2, found in Oryctolagus cuniculus (Rabbit).